The following is a 94-amino-acid chain: Pyrimidine/purine nucleoside phosphorylase (94 aa).

Belongs to the nucleoside phosphorylase PpnP family.

The enzyme catalyses a purine D-ribonucleoside + phosphate = a purine nucleobase + alpha-D-ribose 1-phosphate. The catalysed reaction is adenosine + phosphate = alpha-D-ribose 1-phosphate + adenine. It catalyses the reaction cytidine + phosphate = cytosine + alpha-D-ribose 1-phosphate. It carries out the reaction guanosine + phosphate = alpha-D-ribose 1-phosphate + guanine. The enzyme catalyses inosine + phosphate = alpha-D-ribose 1-phosphate + hypoxanthine. The catalysed reaction is thymidine + phosphate = 2-deoxy-alpha-D-ribose 1-phosphate + thymine. It catalyses the reaction uridine + phosphate = alpha-D-ribose 1-phosphate + uracil. It carries out the reaction xanthosine + phosphate = alpha-D-ribose 1-phosphate + xanthine. Its function is as follows. Catalyzes the phosphorolysis of diverse nucleosides, yielding D-ribose 1-phosphate and the respective free bases. Can use uridine, adenosine, guanosine, cytidine, thymidine, inosine and xanthosine as substrates. Also catalyzes the reverse reactions. In Vibrio parahaemolyticus serotype O3:K6 (strain RIMD 2210633), this protein is Pyrimidine/purine nucleoside phosphorylase.